Here is a 371-residue protein sequence, read N- to C-terminus: Zygote-specific protein 3 (371 aa).

Positions 1 to 24 (MLRSAGRVAAVALLALFALGCVSA) are cleaved as a signal peptide. Asn-41 carries N-linked (GlcNAc...) asparagine glycosylation. 2 ANK repeats span residues 62–91 (TRRL…LARV) and 94–123 (GTTT…DPNA). WW domains follow at residues 159–187 (EPGA…WAVP) and 283–313 (YATP…WELP).

It is found in the endoplasmic reticulum lumen. In terms of biological role, may have a role in the remodeling of the endoplasmic reticulum upon zygote formation. The protein is Zygote-specific protein 3 (ZYS3) of Chlamydomonas reinhardtii (Chlamydomonas smithii).